Consider the following 109-residue polypeptide: Probable gas vesicle protein J1 (109 aa).

The protein belongs to the gas vesicle GvpA family. Interacts with GvpA.

Its subcellular location is the gas vesicle. Its function is as follows. A minor component of the gas vesicle, might be involved in nucleating gas vesicle formation. Gas vesicles (GV) are hollow, gas filled proteinaceous nanostructures. It is not clear what function GVs perform in soil bacteria. This is Probable gas vesicle protein J1 (gvpJ1) from Streptomyces coelicolor (strain ATCC BAA-471 / A3(2) / M145).